The following is a 358-amino-acid chain: GDSL esterase/lipase EXL5 (358 aa).

Residues 1-21 (MFRKKMLVLALFSIYFLSIEA) form the signal peptide. A glycan (N-linked (GlcNAc...) asparagine) is linked at Asn-24. The Nucleophile role is filled by Ser-36. Catalysis depends on residues Asp-333 and His-336.

It belongs to the 'GDSL' lipolytic enzyme family. Flower buds.

It localises to the secreted. The chain is GDSL esterase/lipase EXL5 (EXL5) from Arabidopsis thaliana (Mouse-ear cress).